We begin with the raw amino-acid sequence, 369 residues long: Anhydro-N-acetylmuramic acid kinase (369 aa).

12-19 (GTSLDGVD) provides a ligand contact to ATP.

This sequence belongs to the anhydro-N-acetylmuramic acid kinase family.

The enzyme catalyses 1,6-anhydro-N-acetyl-beta-muramate + ATP + H2O = N-acetyl-D-muramate 6-phosphate + ADP + H(+). The protein operates within amino-sugar metabolism; 1,6-anhydro-N-acetylmuramate degradation. Its pathway is cell wall biogenesis; peptidoglycan recycling. Its function is as follows. Catalyzes the specific phosphorylation of 1,6-anhydro-N-acetylmuramic acid (anhMurNAc) with the simultaneous cleavage of the 1,6-anhydro ring, generating MurNAc-6-P. Is required for the utilization of anhMurNAc either imported from the medium or derived from its own cell wall murein, and thus plays a role in cell wall recycling. The protein is Anhydro-N-acetylmuramic acid kinase of Escherichia coli (strain SMS-3-5 / SECEC).